The chain runs to 794 residues: EVI5-like protein (794 aa).

Positions 1 to 30 (MASPTLSPDSSSQEALSAPTCSPTSDSENL) are enriched in polar residues. 2 disordered regions span residues 1-36 (MASPTLSPDSSSQEALSAPTCSPTSDSENLSPDELE) and 49-75 (EADSKSMRSMNGSRRNSGSSLVSSSSA). A compositionally biased stretch (low complexity) spans 55-75 (MRSMNGSRRNSGSSLVSSSSA). Residues 115-300 (GIPHHFRAIV…RVFDIFMYEG (186 aa)) form the Rab-GAP TBC domain. 2 coiled-coil regions span residues 358-449 (KKMK…QQEN) and 569-709 (EAQA…LKGP). S685 bears the Phosphoserine mark. The interval 766–794 (LERPAKDSEGSSDSDADELAAPYSQGLDN) is disordered.

In terms of assembly, may interact with RAB10.

Functions as a GTPase-activating protein (GAP) with a broad specificity. The sequence is that of EVI5-like protein (EVI5L) from Homo sapiens (Human).